We begin with the raw amino-acid sequence, 863 residues long: Importin subunit beta-1 (863 aa).

19 HEAT repeats span residues Asn-2 to Thr-31, Phe-33 to Lys-62, Val-85 to Thr-124, Asp-129 to Glu-159, Ser-170 to Ser-201, Glu-212 to Tyr-248, Pro-253 to Glu-299, Phe-314 to Gly-360, Val-364 to Ser-392, Val-399 to Val-439, Leu-449 to Phe-481, Tyr-496 to Phe-530, Leu-536 to Arg-586, Arg-592 to Leu-630, Glu-635 to Ala-671, Leu-677 to Ile-715, Gln-720 to Ala-767, Gln-778 to Ser-815, and Lys-822 to Ala-861. The region spanning Ala-21–Ser-101 is the Importin N-terminal domain.

This sequence belongs to the importin beta family. Importin beta-1 subfamily. As to quaternary structure, forms a complex with an importin alpha subunit. Interacts with Ran; interacts specifically with the GTP-bound form of Ran (GTP-Ran), protecting it from GTP hydrolysis and nucleotide exchange. Interacts with nucleoporins.

It localises to the cytoplasm. It is found in the nucleus envelope. Its subcellular location is the nucleus. The protein localises to the nuclear pore complex. Functionally, importin beta subunit that functions in nuclear protein import through association with the importin alpha subunit, which binds to the clasical nuclear localization signal (cNLS) in cargo substrates. Docking of the importin/substrate complex to the nuclear pore complex (NPC) is mediated by importin beta through binding to nucleoporin FxFG repeats and the complex is subsequently translocated through the pore by an energy requiring, Ran-dependent mechanism. At the nucleoplasmic side of the NPC, GTP-Ran binds to importin beta and the three components separate, leading to release of the cargo. Importin alpha and beta are re-exported from the nucleus to the cytoplasm where GTP hydrolysis releases Ran from importin beta. The directionality of nuclear import is thought to be conferred by an asymmetric distribution of the GTP- and GDP-bound forms of Ran between the cytoplasm and nucleus. This Schizosaccharomyces pombe (strain 972 / ATCC 24843) (Fission yeast) protein is Importin subunit beta-1.